Here is a 451-residue protein sequence, read N- to C-terminus: Eukaryotic translation initiation factor 3 subunit E (451 aa).

One can recognise a PCI domain in the interval Pro-245–Ser-425.

The protein belongs to the eIF-3 subunit E family. As to quaternary structure, component of the eukaryotic translation initiation factor 3 (eIF-3) complex.

It is found in the cytoplasm. Functionally, component of the eukaryotic translation initiation factor 3 (eIF-3) complex, which is involved in protein synthesis of a specialized repertoire of mRNAs and, together with other initiation factors, stimulates binding of mRNA and methionyl-tRNAi to the 40S ribosome. The eIF-3 complex specifically targets and initiates translation of a subset of mRNAs involved in cell proliferation. This is Eukaryotic translation initiation factor 3 subunit E (int6) from Sclerotinia sclerotiorum (strain ATCC 18683 / 1980 / Ss-1) (White mold).